The chain runs to 394 residues: MFKKFLWRDCVFIIVLITTIALPAYIHTNYPQAFSRFFYPVEAWFTKRDLRCSKNAPHFLRQLLIEMIDEQKSLNNQVAFWHNGQLFHCESGWEDGFRGEKPMRVNSRFRYASVTKVLTSALVLHAINEQKLSLDSKIIELLELPAPKDPRVAAITIKMLLEHSAGFDRLKTYTPMLTMDVKPWCPTNLAQLSETKLDFDPETQFQYSNVGYCLLGAAIEKAYGRSFQSVAEDYFQLKKYGVSYVGDGFLPDEIQYDYRFEPFYAESYSKHFDFKDSLYAVGGLSGSAADIVQLLAALPKETPLTIFSHNHAPCSINILDACYGYALQPYQASRQSYTLWGKSGFFPGVNTDVFLDEQGNILATFRAASTKKTADTLLLRQYAYSLMNEYVNQK.

The polypeptide is Probable fimbrial assembly protein FimD, serogroup H1 (fimD) (Dichelobacter nodosus (Bacteroides nodosus)).